The sequence spans 147 residues: SPI-1 type 3 secretion system pilotin (147 aa).

Positions 1–15 (MKKFYSCLPVFLLIG) are cleaved as a signal peptide. The N-palmitoyl cysteine moiety is linked to residue Cys16. The S-diacylglycerol cysteine moiety is linked to residue Cys16.

It belongs to the InvH family.

The protein localises to the cell outer membrane. Its function is as follows. Involved in the synthesis of the type III secretion system (T3SS), also called injectisome, which is used to inject bacterial effector proteins into eukaryotic host cells. Pilot protein that is required for the proper localization of the secretin InvG/SctC in the outer membrane. Necessary for efficient adherence and entry of these organisms into cultured epithelial cells. The polypeptide is SPI-1 type 3 secretion system pilotin (Salmonella choleraesuis (strain SC-B67)).